We begin with the raw amino-acid sequence, 431 residues long: Dual-specificity RNA methyltransferase RlmN (431 aa).

The interval 1–26 is disordered; that stretch reads MATASLDTARPERRAGSDPFIEKTPE. Residues 9–26 show a composition bias toward basic and acidic residues; that stretch reads ARPERRAGSDPFIEKTPE. E138 serves as the catalytic Proton acceptor. In terms of domain architecture, Radical SAM core spans 144–394; sequence ANDRGTLCVS…VRTPRGRDIL (251 aa). C151 and C397 are joined by a disulfide. [4Fe-4S] cluster-binding residues include C158, C162, and C165. S-adenosyl-L-methionine is bound by residues 223 to 224, S255, 277 to 279, and N354; these read GE and SLH. Catalysis depends on C397, which acts as the S-methylcysteine intermediate.

Belongs to the radical SAM superfamily. RlmN family. [4Fe-4S] cluster serves as cofactor.

The protein resides in the cytoplasm. It catalyses the reaction adenosine(2503) in 23S rRNA + 2 reduced [2Fe-2S]-[ferredoxin] + 2 S-adenosyl-L-methionine = 2-methyladenosine(2503) in 23S rRNA + 5'-deoxyadenosine + L-methionine + 2 oxidized [2Fe-2S]-[ferredoxin] + S-adenosyl-L-homocysteine. The catalysed reaction is adenosine(37) in tRNA + 2 reduced [2Fe-2S]-[ferredoxin] + 2 S-adenosyl-L-methionine = 2-methyladenosine(37) in tRNA + 5'-deoxyadenosine + L-methionine + 2 oxidized [2Fe-2S]-[ferredoxin] + S-adenosyl-L-homocysteine. Its function is as follows. Specifically methylates position 2 of adenine 2503 in 23S rRNA and position 2 of adenine 37 in tRNAs. m2A2503 modification seems to play a crucial role in the proofreading step occurring at the peptidyl transferase center and thus would serve to optimize ribosomal fidelity. The chain is Dual-specificity RNA methyltransferase RlmN from Methylobacterium sp. (strain 4-46).